A 1197-amino-acid chain; its full sequence is Disease resistance-like protein CSA1 (1197 aa).

The TIR domain occupies 15 to 178; it reads PQDQVFINFR…IIIRKVKEIL (164 aa). The active site involves E89. In terms of domain architecture, NB-ARC spans 210 to 480; that stretch reads RIKQLEEKLR…ACFRSQDENY (271 aa). 10 LRR repeats span residues 614–636, 638–659, 694–716, 728–749, 750–774, 776–796, 797–819, 820–843, 845–862, and 863–889; these read LNEV…DFNP, NLVD…NKDA, TALK…NLRG, LISL…QVIS, DKLE…RLQR, VMLN…LGQL, KALE…TWGN, MSRL…LSVR, LCLN…LLNK, and FSQL…NLQY.

The catalysed reaction is NAD(+) + H2O = ADP-D-ribose + nicotinamide + H(+). In terms of biological role, TIR-NB-LRR receptor-like protein that functions in photomorphogenic development. May function downstream of phytochrome B (phyB) signaling. This chain is Disease resistance-like protein CSA1, found in Arabidopsis thaliana (Mouse-ear cress).